Consider the following 727-residue polypeptide: DNA topoisomerase 3 (727 aa).

A Toprim domain is found at 3-136 (KTVVLAEKPS…IKRLWISSVT (134 aa)). 2 residues coordinate Mg(2+): Glu-9 and Asp-105. A Topo IA-type catalytic domain is found at 153–593 (YENLYHSAVA…DMKAYAHQTV (441 aa)). An interaction with DNA region spans residues 187–192 (SCGRVQ). The O-(5'-phospho-DNA)-tyrosine intermediate role is filled by Tyr-310. A compositionally biased stretch (basic and acidic residues) spans 685 to 699 (KRKNKDKARATKRDV). A disordered region spans residues 685–714 (KRKNKDKARATKRDVSSYMKKQNKDEPINN).

Belongs to the type IA topoisomerase family. It depends on Mg(2+) as a cofactor.

It catalyses the reaction ATP-independent breakage of single-stranded DNA, followed by passage and rejoining.. Functionally, releases the supercoiling and torsional tension of DNA, which is introduced during the DNA replication and transcription, by transiently cleaving and rejoining one strand of the DNA duplex. Introduces a single-strand break via transesterification at a target site in duplex DNA. The scissile phosphodiester is attacked by the catalytic tyrosine of the enzyme, resulting in the formation of a DNA-(5'-phosphotyrosyl)-enzyme intermediate and the expulsion of a 3'-OH DNA strand. The free DNA strand then undergoes passage around the unbroken strand, thus removing DNA supercoils. Finally, in the religation step, the DNA 3'-OH attacks the covalent intermediate to expel the active-site tyrosine and restore the DNA phosphodiester backbone. The protein is DNA topoisomerase 3 of Bacillus subtilis (strain 168).